We begin with the raw amino-acid sequence, 275 residues long: Large ribosomal subunit protein uL2 (275 aa).

The interval 223–275 (VAMNPVDHPHGGGEGRTSGGRHPVSPWGQPTKGYKTRSNKRTDKYIVRRRNKK) is disordered.

It belongs to the universal ribosomal protein uL2 family. In terms of assembly, part of the 50S ribosomal subunit. Forms a bridge to the 30S subunit in the 70S ribosome.

Functionally, one of the primary rRNA binding proteins. Required for association of the 30S and 50S subunits to form the 70S ribosome, for tRNA binding and peptide bond formation. It has been suggested to have peptidyltransferase activity; this is somewhat controversial. Makes several contacts with the 16S rRNA in the 70S ribosome. The polypeptide is Large ribosomal subunit protein uL2 (Shewanella pealeana (strain ATCC 700345 / ANG-SQ1)).